Reading from the N-terminus, the 1047-residue chain is Cation efflux system protein CusA (1047 aa).

12 consecutive transmembrane segments (helical) span residues 14–34 (FLVLMGALFLSIWGTWTIINT), 338–358 (LSGKLLEEFIVVAVVCALFLW), 363–383 (ALVAIISLPLGLCIAFIVMHF), 391–411 (MSLGGIAIAVGAMVDAAIVMI), 446–466 (VGPALFISLLIITLSFIPIFT), 485–505 (AMAGAALLAIVVIPILMGYWI), 532–552 (VLHWPKTTLLVAALSVLTVLW), 871–891 (KLKLMVPMTLMIIFVLLYLAF), 898–918 (LLIISSVPFALVGGIWLLWWM), 928–948 (TGFIALAGVAAEFGVVMLMYL), 985–1005 (AMTVAVIIAGLLPILWGTGAG), and 1012–1032 (IAAPMIGGMITAPLLSLFIIP).

It belongs to the resistance-nodulation-cell division (RND) (TC 2.A.6) family. The cus efflux system is composed of CusA, CusB, CusC and CusF.

Its subcellular location is the cell inner membrane. Part of a cation efflux system that mediates resistance to copper and silver. This is Cation efflux system protein CusA (cusA) from Escherichia coli (strain K12).